Reading from the N-terminus, the 299-residue chain is Oxygen-dependent coproporphyrinogen-III oxidase (299 aa).

Ser92 serves as a coordination point for substrate. 2 residues coordinate a divalent metal cation: His96 and His106. Catalysis depends on His106, which acts as the Proton donor. Residue 108–110 participates in substrate binding; it reads NVR. A divalent metal cation is bound by residues His145 and His175. The interval 240–275 is important for dimerization; it reads YVEFNLVWDRGTLFGLQTGGRTESILMSMPPLVRWE. Residue 258–260 participates in substrate binding; sequence GGR.

This sequence belongs to the aerobic coproporphyrinogen-III oxidase family. As to quaternary structure, homodimer. A divalent metal cation is required as a cofactor.

It is found in the cytoplasm. It carries out the reaction coproporphyrinogen III + O2 + 2 H(+) = protoporphyrinogen IX + 2 CO2 + 2 H2O. The protein operates within porphyrin-containing compound metabolism; protoporphyrin-IX biosynthesis; protoporphyrinogen-IX from coproporphyrinogen-III (O2 route): step 1/1. Functionally, involved in the heme biosynthesis. Catalyzes the aerobic oxidative decarboxylation of propionate groups of rings A and B of coproporphyrinogen-III to yield the vinyl groups in protoporphyrinogen-IX. The polypeptide is Oxygen-dependent coproporphyrinogen-III oxidase (Salmonella choleraesuis (strain SC-B67)).